Here is a 59-residue protein sequence, read N- to C-terminus: Photosystem II reaction center protein K (59 aa).

A propeptide spanning residues 1 to 22 (MILYSHLSTLIDIDLSNNIFLA) is cleaved from the precursor. A helical transmembrane segment spans residues 30–50 (IFDPLVDVMPVIPVFFLLLAF).

It belongs to the PsbK family. In terms of assembly, PSII is composed of 1 copy each of membrane proteins PsbA, PsbB, PsbC, PsbD, PsbE, PsbF, PsbH, PsbI, PsbJ, PsbK, PsbL, PsbM, PsbT, PsbX, PsbY, PsbZ, Psb30/Ycf12, at least 3 peripheral proteins of the oxygen-evolving complex and a large number of cofactors. It forms dimeric complexes.

The protein localises to the plastid. It is found in the chloroplast thylakoid membrane. Functionally, one of the components of the core complex of photosystem II (PSII). PSII is a light-driven water:plastoquinone oxidoreductase that uses light energy to abstract electrons from H(2)O, generating O(2) and a proton gradient subsequently used for ATP formation. It consists of a core antenna complex that captures photons, and an electron transfer chain that converts photonic excitation into a charge separation. In Chara vulgaris (Common stonewort), this protein is Photosystem II reaction center protein K.